A 365-amino-acid polypeptide reads, in one-letter code: UDP-N-acetylglucosamine--N-acetylmuramyl-(pentapeptide) pyrophosphoryl-undecaprenol N-acetylglucosamine transferase (365 aa).

UDP-N-acetyl-alpha-D-glucosamine contacts are provided by residues 19-21 (TGG), Asn-131, Arg-170, Ser-201, Ile-255, 274-279 (ALTVTE), and Gln-300.

Belongs to the glycosyltransferase 28 family. MurG subfamily.

The protein localises to the cell inner membrane. The catalysed reaction is di-trans,octa-cis-undecaprenyl diphospho-N-acetyl-alpha-D-muramoyl-L-alanyl-D-glutamyl-meso-2,6-diaminopimeloyl-D-alanyl-D-alanine + UDP-N-acetyl-alpha-D-glucosamine = di-trans,octa-cis-undecaprenyl diphospho-[N-acetyl-alpha-D-glucosaminyl-(1-&gt;4)]-N-acetyl-alpha-D-muramoyl-L-alanyl-D-glutamyl-meso-2,6-diaminopimeloyl-D-alanyl-D-alanine + UDP + H(+). Its pathway is cell wall biogenesis; peptidoglycan biosynthesis. Its function is as follows. Cell wall formation. Catalyzes the transfer of a GlcNAc subunit on undecaprenyl-pyrophosphoryl-MurNAc-pentapeptide (lipid intermediate I) to form undecaprenyl-pyrophosphoryl-MurNAc-(pentapeptide)GlcNAc (lipid intermediate II). This chain is UDP-N-acetylglucosamine--N-acetylmuramyl-(pentapeptide) pyrophosphoryl-undecaprenol N-acetylglucosamine transferase, found in Acinetobacter baylyi (strain ATCC 33305 / BD413 / ADP1).